A 92-amino-acid chain; its full sequence is Large ribosomal subunit protein eL42 (92 aa).

Zn(2+) contacts are provided by Cys11, Cys14, Cys70, and Cys73. A C4-type zinc finger spans residues 11–73 (CPNCRKHTVH…LDLRLKCKEC (63 aa)).

The protein belongs to the eukaryotic ribosomal protein eL42 family. In terms of assembly, part of the 50S ribosomal subunit. It depends on Zn(2+) as a cofactor.

Its function is as follows. Binds to the 23S rRNA. The chain is Large ribosomal subunit protein eL42 from Methanothermobacter thermautotrophicus (strain ATCC 29096 / DSM 1053 / JCM 10044 / NBRC 100330 / Delta H) (Methanobacterium thermoautotrophicum).